We begin with the raw amino-acid sequence, 579 residues long: Putative adenine deaminase OB0751 (579 aa).

Belongs to the metallo-dependent hydrolases superfamily. Adenine deaminase family.

It carries out the reaction adenine + H2O + H(+) = hypoxanthine + NH4(+). This is Putative adenine deaminase OB0751 from Oceanobacillus iheyensis (strain DSM 14371 / CIP 107618 / JCM 11309 / KCTC 3954 / HTE831).